Here is a 596-residue protein sequence, read N- to C-terminus: Nuclear receptor subfamily 2 group C member 2 (596 aa).

Phosphoserine; by MAPK is present on Ser19. Ser46 is subject to Phosphoserine. Residues Ser55 and Ser68 each carry the phosphoserine; by MAPK modification. Ser98 carries the post-translational modification Phosphoserine. The segment at residues 114-189 (VEYCVVCGDK…MGMKMESVQS (76 aa)) is a DNA-binding region (nuclear receptor). 2 NR C4-type zinc fingers span residues 117–137 (CVVC…CEGC) and 153–177 (CRSN…LKKC). Lys192 is covalently cross-linked (Glycyl lysine isopeptide (Lys-Gly) (interchain with G-Cter in SUMO2)). Ser219 carries the phosphoserine modification. N6-acetyllysine is present on Lys231. The NR LBD domain maps to 341 to 583 (GSIHVISRDQ…SIIPYILKME (243 aa)).

Belongs to the nuclear hormone receptor family. NR2 subfamily. As to quaternary structure, homodimer; can bind DNA as homodimer. Heterodimer; binds DNA as a heterodimer with NR2C1 required for chromatin remodeling and for binding to promoter regions such as globin DR1 repeats. Interacts with PCAF; the interaction preferentially occurs on the non-phosphorylated form and induces NR2C2-mediated transactivation activity and does not require the ligand-binding domain. Interacts (MAPK-mediated phosphorylated form) with NRIP1; the interaction promotes repression of NR2C2-mediated activity. Interacts with NR2C2AP; the interaction represses selective NR2C2-mediated transcriptional activity. Interacts with NLRP10. Interacts (via ligand-binding region) with transcriptional corepressor JAZF1; the interaction promotes NR2C2-mediated transcriptional repression. In terms of processing, phosphorylation on Ser-19 and Ser-68 is an important regulator of NR2C2-mediated transcriptional activity. Phosphorylation on these residues recruits the corepressor, NRIP1, leading to transcripional repression, whereas the non-phosphorylated form preferentially recruits the coactivator, PCAF.

The protein resides in the nucleus. Its function is as follows. Orphan nuclear receptor that can act as a repressor or activator of transcription. An important repressor of nuclear receptor signaling pathways such as retinoic acid receptor, retinoid X, vitamin D3 receptor, thyroid hormone receptor and estrogen receptor pathways. May regulate gene expression during the late phase of spermatogenesis. Together with NR2C1, forms the core of the DRED (direct repeat erythroid-definitive) complex that represses embryonic and fetal globin transcription including that of GATA1. Binds to hormone response elements (HREs) consisting of two 5'-AGGTCA-3' half site direct repeat consensus sequences. Plays a fundamental role in early embryonic development and embryonic stem cells. Required for normal spermatogenesis and cerebellum development. Appears to be important for neurodevelopmentally regulated behavior. Activates transcriptional activity of LHCG. Antagonist of PPARA-mediated transactivation. The protein is Nuclear receptor subfamily 2 group C member 2 (NR2C2) of Homo sapiens (Human).